Reading from the N-terminus, the 354-residue chain is Dihydroorotate dehydrogenase (quinone) (354 aa).

Residues 61 to 65 (AGYDK) and A85 contribute to the FMN site. Position 65 (K65) interacts with substrate. 110–114 (NRFGF) contacts substrate. Residues N139 and N170 each contribute to the FMN site. Residue N170 coordinates substrate. The Nucleophile role is filled by S173. N175 is a binding site for substrate. Residues K211 and T239 each coordinate FMN. Residue 240–241 (NT) coordinates substrate. FMN-binding positions include G261, G290, and 311-312 (YT).

The protein belongs to the dihydroorotate dehydrogenase family. Type 2 subfamily. Monomer. Requires FMN as cofactor.

It is found in the cell membrane. The catalysed reaction is (S)-dihydroorotate + a quinone = orotate + a quinol. Its pathway is pyrimidine metabolism; UMP biosynthesis via de novo pathway; orotate from (S)-dihydroorotate (quinone route): step 1/1. In terms of biological role, catalyzes the conversion of dihydroorotate to orotate with quinone as electron acceptor. This Cereibacter sphaeroides (strain KD131 / KCTC 12085) (Rhodobacter sphaeroides) protein is Dihydroorotate dehydrogenase (quinone).